Here is a 104-residue protein sequence, read N- to C-terminus: Large ribosomal subunit protein uL24 (104 aa).

It belongs to the universal ribosomal protein uL24 family. As to quaternary structure, part of the 50S ribosomal subunit.

Functionally, one of two assembly initiator proteins, it binds directly to the 5'-end of the 23S rRNA, where it nucleates assembly of the 50S subunit. Its function is as follows. One of the proteins that surrounds the polypeptide exit tunnel on the outside of the subunit. The chain is Large ribosomal subunit protein uL24 from Erwinia tasmaniensis (strain DSM 17950 / CFBP 7177 / CIP 109463 / NCPPB 4357 / Et1/99).